A 380-amino-acid polypeptide reads, in one-letter code: Cytochrome b (380 aa).

4 consecutive transmembrane segments (helical) span residues 33–53 (FGSL…FLAM), 77–98 (WFIR…YLHI), 113–133 (WTIG…GYVL), and 178–198 (FFTF…VHLL). Heme b contacts are provided by histidine 83 and histidine 97. Histidine 182 and histidine 196 together coordinate heme b. Residue histidine 201 coordinates a ubiquinone. 4 helical membrane-spanning segments follow: residues 226 to 246 (YKDL…ALFS), 288 to 308 (LGGV…PILH), 320 to 340 (LTQT…WIGG), and 347 to 367 (FVII…VLAP).

The protein belongs to the cytochrome b family. In terms of assembly, the cytochrome bc1 complex contains 3 respiratory subunits (MT-CYB, CYC1 and UQCRFS1), 2 core proteins (UQCRC1 and UQCRC2) and probably 6 low-molecular weight proteins. The cofactor is heme b.

It is found in the mitochondrion inner membrane. Its function is as follows. Component of the ubiquinol-cytochrome c reductase complex (complex III or cytochrome b-c1 complex) that is part of the mitochondrial respiratory chain. The b-c1 complex mediates electron transfer from ubiquinol to cytochrome c. Contributes to the generation of a proton gradient across the mitochondrial membrane that is then used for ATP synthesis. The protein is Cytochrome b (mt-cyb) of Lampris guttatus (Opah).